A 161-amino-acid polypeptide reads, in one-letter code: Arachidonate 5-lipoxygenase-activating protein (161 aa).

Residues 1 to 8 (MDQEAVGN) lie on the Lumenal side of the membrane. Residues 9 to 30 (VVLLALVTLISVVQNAFFAHKV) traverse the membrane as a helical segment. The Cytoplasmic segment spans residues 31-52 (EHESKAHNGRSFQRTGTLAFER). A helical membrane pass occupies residues 53–77 (VYTANQNCVDAYPTFLVVLWTAGLL). Residues 78-80 (CSQ) are Lumenal-facing. A helical transmembrane segment spans residues 81-102 (VPAAFAGLMYLFVRQKYFVGYL). Residues 103-107 (GERTQ) are Cytoplasmic-facing. The stretch at 108–115 (STPGYIFG) is an intramembrane region. A helical membrane pass occupies residues 116-128 (KRIILFLFLMSFA). Residues 129-161 (GILNHYLIFFFGSDFENYIRTVSTTISPLLLIP) are Lumenal-facing.

This sequence belongs to the MAPEG family. Homotrimer. Interacts with LTC4S and ALOX5.

It is found in the nucleus membrane. It localises to the endoplasmic reticulum membrane. Its function is as follows. Required for leukotriene biosynthesis by ALOX5 (5-lipoxygenase). Anchors ALOX5 to the membrane. Binds arachidonic acid, and could play an essential role in the transfer of arachidonic acid to ALOX5. Binds to MK-886, a compound that blocks the biosynthesis of leukotrienes. The protein is Arachidonate 5-lipoxygenase-activating protein (Alox5ap) of Mus musculus (Mouse).